The primary structure comprises 346 residues: FAS-associated factor 2 (346 aa).

N6-acetyllysine is present on lysine 68. Residues 176 to 251 (SERLEREERN…EEKERKLECL (76 aa)) adopt a coiled-coil conformation. Residues 200–262 (ASLRADQEKE…PEPSPDDPDS (63 aa)) are disordered. Positions 204–249 (ADQEKERKKREERERKRRKEEEVQQQKLAEERRRQNLQEEKERKLE) are enriched in basic and acidic residues. Positions 258-340 (DDPDSVKIIF…GLSHTEVLFV (83 aa)) constitute a UBX domain.

In terms of assembly, identified in a complex that contains SEL1L, OS9, FAF2/UBXD8, UBE2J1/UBC6E and AUP1. Interacts with YOD1. Interacts (via N-terminus) with UBQLN2 (via C-terminus). Interacts with PNPLA2 and UBAC2. Interacts with ZFAND2B; probably through VCP. Interacts with LMBR1L.

The protein resides in the cytoplasm. The protein localises to the lipid droplet. It is found in the endoplasmic reticulum. Its function is as follows. Plays an important role in endoplasmic reticulum-associated degradation (ERAD) that mediates ubiquitin-dependent degradation of misfolded endoplasmic reticulum proteins. By controlling the steady-state expression of the IGF1R receptor, indirectly regulates the insulin-like growth factor receptor signaling pathway. Involved in inhibition of lipid droplet degradation by binding to phospholipase PNPL2 and inhibiting its activity by promoting dissociation of PNPL2 from its endogenous activator, ABHD5 which inhibits the rate of triacylglycerol hydrolysis. Involved in stress granule disassembly: associates with ubiquitinated G3BP1 in response to heat shock, thereby promoting interaction between ubiquitinated G3BP1 and VCP, followed by G3BP1 extraction from stress granules and stress granule disassembly. This is FAS-associated factor 2 (Faf2) from Rattus norvegicus (Rat).